Consider the following 193-residue polypeptide: Rho-related GTP-binding protein RhoA-C (193 aa).

GTP is bound by residues 12–19 (GDGACGKT), 30–37 (FPEVYVPT), 59–63 (DTAGQ), 117–120 (NKKD), and 160–162 (SAK). The (Microbial infection) O-linked (GlcNAc) tyrosine; by Yersinia Afp18 glycan is linked to Y34. A Cysteine methyl ester modification is found at C190. C190 carries S-geranylgeranyl cysteine lipidation. A propeptide spans 191–193 (LLL) (removed in mature form).

This sequence belongs to the small GTPase superfamily. Rho family. In terms of processing, (Microbial infection) Glycosylated at Tyr-34 by Yersinia ruckeri toxin Afp18. Mono-O-GlcNAcylation by Afp18 inhibits RhoA activation by guanine nucleotide exchange factors and blocks RhoA signaling.

The protein localises to the cell membrane. Its function is as follows. Regulates a signal transduction pathway linking plasma membrane receptors to the assembly of focal adhesions and actin stress fibers. The polypeptide is Rho-related GTP-binding protein RhoA-C (Danio rerio (Zebrafish)).